The following is a 393-amino-acid chain: Methylthioribose kinase (393 aa).

Residues Asn-38, Lys-53, and 107–109 (EDL) contribute to the ATP site. Substrate is bound at residue Asp-225. Position 242–244 (242–244 (DPE)) interacts with ATP. Residue Arg-332 participates in substrate binding.

This sequence belongs to the methylthioribose kinase family. In terms of assembly, homodimer.

It catalyses the reaction 5-(methylsulfanyl)-D-ribose + ATP = 5-(methylsulfanyl)-alpha-D-ribose 1-phosphate + ADP + H(+). It functions in the pathway amino-acid biosynthesis; L-methionine biosynthesis via salvage pathway; S-methyl-5-thio-alpha-D-ribose 1-phosphate from S-methyl-5'-thioadenosine (hydrolase route): step 2/2. Catalyzes the phosphorylation of methylthioribose into methylthioribose-1-phosphate. This Bacillus cereus (strain AH820) protein is Methylthioribose kinase.